A 349-amino-acid polypeptide reads, in one-letter code: Protein RAE1 (349 aa).

A disordered region spans residues 1-21; it reads MATFGAPATANSNPNKSYEVT. Residue A2 is modified to N-acetylalanine. A compositionally biased stretch (polar residues) spans 9 to 21; the sequence is TANSNPNKSYEVT. WD repeat units lie at residues 23–62, 70–109, 112–151, 153–190, and 244–283; these read SPAD…ASLA, SHDQ…QPVT, MHEG…PVHT, QLPD…TEFK, and NDIY…RLKA. A DWD box motif is present at residues 128–144; the sequence is LLATGSWDKTLKYWDTR.

Belongs to the WD repeat rae1 family. Part of the nuclear pore complex (NPC). The NPC has an eight-fold symmetrical structure comprising a central transport channel and two rings, the cytoplasmic and nuclear rings, to which eight filaments are attached. The cytoplasmic filaments have loose ends, while the nuclear filaments are joined in a distal ring, forming a nuclear basket. NPCs are highly dynamic in configuration and composition, and can be devided in 3 subcomplexes, the NUP62 subcomplex, the NUP107-160 subcomplex and the NUP93 subcomplex, containing approximately 30 different nucleoporin proteins. Interacts with DDB1A.

Its subcellular location is the nucleus envelope. It localises to the nucleus. The protein resides in the nuclear pore complex. This is Protein RAE1 from Arabidopsis thaliana (Mouse-ear cress).